A 146-amino-acid polypeptide reads, in one-letter code: 3-dehydroquinate dehydratase (146 aa).

The active-site Proton acceptor is the Tyr-24. Asn-75, His-81, and Asp-88 together coordinate substrate. His-101 serves as the catalytic Proton donor. Residues 102 to 103 and Arg-112 contribute to the substrate site; that span reads LS.

The protein belongs to the type-II 3-dehydroquinase family. In terms of assembly, homododecamer.

The catalysed reaction is 3-dehydroquinate = 3-dehydroshikimate + H2O. It participates in metabolic intermediate biosynthesis; chorismate biosynthesis; chorismate from D-erythrose 4-phosphate and phosphoenolpyruvate: step 3/7. Its function is as follows. Catalyzes a trans-dehydration via an enolate intermediate. In Caulobacter vibrioides (strain ATCC 19089 / CIP 103742 / CB 15) (Caulobacter crescentus), this protein is 3-dehydroquinate dehydratase.